The following is a 695-amino-acid chain: NADPH--cytochrome P450 reductase (695 aa).

Over 1–8 the chain is Lumenal; sequence MAQLDTLD. A helical membrane pass occupies residues 9–31; the sequence is LVVLVALLVGSVAYFTKGTYWAV. Residues 32–695 are Cytoplasmic-facing; that stretch reads AKDPYASSGP…SGSYQEDVWS (664 aa). The region spanning 66 to 221 is the Flavodoxin-like domain; it reads CVIFYGSQTG…DFLAWKEPMW (156 aa). Residues 72-77, 123-126, 169-178, and aspartate 204 each bind FMN; these read SQTGTA, ATYG, and LGNNTYEHYN. Positions 277 to 538 constitute an FAD-binding FR-type domain; it reads HNPFIAPIVE…HVRHSNFKLP (262 aa). Residue arginine 296 coordinates NADP(+). FAD is bound by residues 451–454, 469–471, and 486–489; these read RYYS, TAV, and GVTT. Residues threonine 552, 614 to 615, 620 to 624, and glutamate 656 each bind NADP(+); these read SR and KVYVQ. Tryptophan 694 contributes to the FAD binding site.

The protein belongs to the NADPH--cytochrome P450 reductase family. In the N-terminal section; belongs to the flavodoxin family. It in the C-terminal section; belongs to the flavoprotein pyridine nucleotide cytochrome reductase family. It depends on FAD as a cofactor. FMN serves as cofactor.

The protein resides in the endoplasmic reticulum membrane. It localises to the mitochondrion outer membrane. The protein localises to the cell membrane. It catalyses the reaction 2 oxidized [cytochrome P450] + NADPH = 2 reduced [cytochrome P450] + NADP(+) + H(+). Its function is as follows. This enzyme is required for electron transfer from NADP to cytochrome P450 in microsomes. It can also provide electron transfer to heme oxygenase and cytochrome B5. Involved in ergosterol biosynthesis. The polypeptide is NADPH--cytochrome P450 reductase (Aspergillus oryzae (strain ATCC 42149 / RIB 40) (Yellow koji mold)).